The chain runs to 593 residues: Ribonuclease Y (593 aa).

A helical membrane pass occupies residues 6-26 (ILLMYLIVGLLTALTVLIFVF). Residues 218 to 278 (DPIKVKKVTD…IKLEVAYNAL (61 aa)) enclose the KH domain. The region spanning 354 to 464 (VLTHSIEAAQ…TKIADFLSAA (111 aa)) is the HD domain.

It belongs to the RNase Y family.

Its subcellular location is the cell membrane. Endoribonuclease that initiates mRNA decay. The sequence is that of Ribonuclease Y from Mycoplasmoides gallisepticum (strain R(low / passage 15 / clone 2)) (Mycoplasma gallisepticum).